A 251-amino-acid polypeptide reads, in one-letter code: Anamorsin homolog (251 aa).

The interval 1–154 (MINFSNTLVI…AENPDFNKSD (154 aa)) is N-terminal SAM-like domain. Positions 155 to 167 (DDNNLVSSDEEIY) are linker. 4 residues coordinate [2Fe-2S] cluster: Cys-170, Cys-181, Cys-184, and Cys-186. The segment at 170–186 (CEDKKKVVNRVCDNCTC) is fe-S binding site A. 4 residues coordinate [4Fe-4S] cluster: Cys-216, Cys-219, Cys-227, and Cys-230. 2 consecutive short sequence motifs (cx2C motif) follow at residues 216–219 (CGNC) and 227–230 (CGSC). The interval 216–230 (CGNCYLGDAFRCGSC) is fe-S binding site B.

This sequence belongs to the anamorsin family. Monomer. Requires [2Fe-2S] cluster as cofactor. The cofactor is [4Fe-4S] cluster.

It is found in the cytoplasm. The protein localises to the mitochondrion intermembrane space. Functionally, component of the cytosolic iron-sulfur (Fe-S) protein assembly (CIA) machinery. Required for the maturation of extramitochondrial Fe-S proteins. Part of an electron transfer chain functioning in an early step of cytosolic Fe-S biogenesis, facilitating the de novo assembly of a [4Fe-4S] cluster on the cytosolic Fe-S scaffold complex. Electrons are transferred from NADPH via a FAD- and FMN-containing diflavin oxidoreductase. Together with the diflavin oxidoreductase, also required for the assembly of the diferric tyrosyl radical cofactor of ribonucleotide reductase (RNR), probably by providing electrons for reduction during radical cofactor maturation in the catalytic small subunit. In Plasmodium yoelii yoelii, this protein is Anamorsin homolog.